We begin with the raw amino-acid sequence, 134 residues long: Lymphocyte antigen 6S (134 aa).

Positions 1–26 (MSSLQAMKTLSLVLLVALLSMERAQG) are cleaved as a signal peptide. Residues 28 to 76 (RCYRCLAVLEGASCSVVSCPFLDGVCVSQKVSVFGSKVRGENKLSLLSC) form the UPAR/Ly6 domain. 4 disulfide bridges follow: cysteine 29–cysteine 53, cysteine 32–cysteine 41, cysteine 76–cysteine 98, and cysteine 99–cysteine 104. Asparagine 105 carries GPI-anchor amidated asparagine lipidation. A propeptide spans 106–134 (AVVLAASSPWALCVQLLLSLGSVFLWALL) (removed in mature form).

It localises to the cell membrane. The sequence is that of Lymphocyte antigen 6S from Homo sapiens (Human).